The primary structure comprises 345 residues: Isocitrate lyase (345 aa).

58–60 serves as a coordination point for substrate; the sequence is SGY. A Mg(2+)-binding site is contributed by D98. C135 (proton acceptor) is an active-site residue. Residues 136–137, R170, 230–234, and T260 each bind substrate; these read GH and NYSSS. The segment at 318–345 is disordered; sequence DPEARRRIEESEGFSEEQADPITSNDDD. Acidic residues predominate over residues 328-345; that stretch reads SEGFSEEQADPITSNDDD.

Homotetramer or homotrimer. It depends on Mg(2+) as a cofactor.

It catalyses the reaction D-threo-isocitrate = glyoxylate + succinate. Its pathway is carbohydrate metabolism; glyoxylate cycle; (S)-malate from isocitrate: step 1/2. Its function is as follows. Involved in the metabolic adaptation in response to environmental changes. Catalyzes the reversible formation of succinate and glyoxylate from isocitrate, a key step of the glyoxylate cycle, which operates as an anaplerotic route for replenishing the tricarboxylic acid cycle during growth on fatty acid substrates. This Haloferax volcanii (strain ATCC 29605 / DSM 3757 / JCM 8879 / NBRC 14742 / NCIMB 2012 / VKM B-1768 / DS2) (Halobacterium volcanii) protein is Isocitrate lyase (aceA).